A 228-amino-acid polypeptide reads, in one-letter code: GDT1-like protein 5 (228 aa).

Residue Gly2 is modified to N-acetylglycine. The next 6 helical transmembrane spans lie at 12–32, 39–59, 71–91, 133–153, 173–193, and 205–225; these read LAMT…AILA, LVLA…ATLG, THHI…WDGF, PFLT…NFFG, LGVV…AVLG, and IVAL…LLTP.

Belongs to the GDT1 family.

The protein resides in the membrane. This chain is GDT1-like protein 5, found in Arabidopsis thaliana (Mouse-ear cress).